The chain runs to 138 residues: MMTIRPTKSTDFEVFTPAHHDILEAKAAGIEPSFPDASECVTLSLYGFPLAIGGNCGDQCWFVTSDQVWRLSGKAKRKFRKLIMEYRDKMLEKYDTLWNYVWVGNTSHIRFLKTIGAVFHEEYTRDGQFQLFTITKGG.

May act as an organizer for the correct association of several proteins in the surrounding of the head-tail connector protein gp8. The polypeptide is Probable scaffold protein gp13 (Escherichia coli (Bacteriophage T7)).